The chain runs to 2214 residues: Genome polyprotein (2214 aa).

Disordered regions lie at residues 1–21 and 600–619; these read MGAQ…VATG and KPQK…VNSQ. The N-myristoyl glycine; by host moiety is linked to residue Gly2. The Cytoplasmic portion of the chain corresponds to 2–1525; sequence GAQVSSQKVG…NLNRAMTILQ (1524 aa). 2 amphipathic alpha-helix regions span residues 580-601 and 581-601; these read QGIE…QPKP and GIEE…QPKP. Residues 606 to 619 show a composition bias toward polar residues; it reads TAQSTPSTSGVNSQ. Active-site for protease 2A activity residues include His906 and Asp924. Residues Cys941 and Cys943 each contribute to the Zn(2+) site. Cys995 (for protease 2A activity) is an active-site residue. The Zn(2+) site is built by Cys1001 and His1003. The membrane-binding stretch occupies residues 1133–1205; sequence GDSWLKKFTE…HQSCPSQEQQ (73 aa). Positions 1133–1271 are oligomerization; that stretch reads GDSWLKKFTE…SPGTGKSIAT (139 aa). Positions 1154-1158 are RNA-binding; it reads SNKIS. Residues 1237–1393 enclose the SF3 helicase domain; it reads ENTINNYIQF…SEHSIKGKLN (157 aa). An ATP-binding site is contributed by 1261 to 1268; the sequence is GSPGTGKS. Residues Cys1401, Cys1404, Cys1413, and Cys1418 each coordinate Zn(2+). A C4-type zinc finger spans residues 1401-1418; the sequence is CKDCPQPANFKKCCPLVC. Residues 1445-1452 form an RNA-binding region; the sequence is ERNRRANI. Residues 1456-1461 are oligomerization; the sequence is MEALFQ. The stretch at 1526–1541 is an intramembrane region; it reads AVTTFAAVAAVVYVMY. Residues 1542-2214 lie on the Cytoplasmic side of the membrane; that stretch reads KLFAGHQGAY…TLYRRWLDSF (673 aa). Tyr1551 carries the post-translational modification O-(5'-phospho-RNA)-tyrosine. A Peptidase C3 domain is found at 1571 to 1749; sequence GPGFDYAVAM…FAAALKRSYF (179 aa). Active-site for protease 3C activity residues include His1610, Glu1641, and Cys1717. The RdRp catalytic domain occupies 1980–2095; sequence EKLFAFDYTG…SYPHEVDASL (116 aa). Residues Asp1986 and Asp2081 each contribute to the Mg(2+) site.

The protein belongs to the picornaviruses polyprotein family. In terms of assembly, interacts with capsid protein VP1 and capsid protein VP3 to form heterotrimeric protomers. Interacts with capsid protein VP0, and capsid protein VP3 to form heterotrimeric protomers. Five protomers subsequently associate to form pentamers which serve as building blocks for the capsid. Interacts with capsid protein VP2, capsid protein VP3 and capsid protein VP4 following cleavage of capsid protein VP0. As to quaternary structure, interacts with capsid protein VP1 and capsid protein VP3 in the mature capsid. In terms of assembly, interacts with capsid protein VP0 and capsid protein VP1 to form heterotrimeric protomers. Five protomers subsequently associate to form pentamers which serve as building blocks for the capsid. Interacts with capsid protein VP4 in the mature capsid. Interacts with protein 2C; this interaction may be important for virion morphogenesis. Interacts with capsid protein VP1 and capsid protein VP3. As to quaternary structure, homodimer. In terms of assembly, homohexamer; forms a hexameric ring structure with 6-fold symmetry characteristic of AAA+ ATPases. Interacts (via N-terminus) with host RTN3 (via reticulon domain); this interaction is important for viral replication. Interacts with capsid protein VP3; this interaction may be important for virion morphogenesis. Interacts with protein 3CD. As to quaternary structure, homodimer. Interacts with host GBF1. Interacts (via GOLD domain) with host ACBD3 (via GOLD domain); this interaction allows the formation of a viral protein 3A/ACBD3 heterotetramer with a 2:2 stoichiometry, which will stimulate the recruitment of host PI4KB in order to synthesize PI4P at the viral RNA replication sites. In terms of assembly, interacts with RNA-directed RNA polymerase. Interacts with protein 3AB and with RNA-directed RNA polymerase. As to quaternary structure, interacts with Viral protein genome-linked and with protein 3CD. Requires Mg(2+) as cofactor. Specific enzymatic cleavages in vivo by the viral proteases yield processing intermediates and the mature proteins. Post-translationally, myristoylation is required for the formation of pentamers during virus assembly. Further assembly of 12 pentamers and a molecule of genomic RNA generates the provirion. In terms of processing, during virion maturation, immature virions are rendered infectious following cleavage of VP0 into VP4 and VP2. This maturation seems to be an autocatalytic event triggered by the presence of RNA in the capsid and it is followed by a conformational change infectious virion. Myristoylation is required during RNA encapsidation and formation of the mature virus particle. Post-translationally, VPg is uridylylated by the polymerase into VPg-pUpU. This acts as a nucleotide-peptide primer for the genomic RNA replication.

It localises to the virion. It is found in the host cytoplasm. The protein localises to the host cytoplasmic vesicle membrane. The protein resides in the host nucleus. The catalysed reaction is a ribonucleoside 5'-triphosphate + H2O = a ribonucleoside 5'-diphosphate + phosphate + H(+). It catalyses the reaction Selective cleavage of Tyr-|-Gly bond in the picornavirus polyprotein.. It carries out the reaction RNA(n) + a ribonucleoside 5'-triphosphate = RNA(n+1) + diphosphate. The enzyme catalyses Selective cleavage of Gln-|-Gly bond in the poliovirus polyprotein. In other picornavirus reactions Glu may be substituted for Gln, and Ser or Thr for Gly.. Its activity is regulated as follows. Replication or transcription is subject to high level of random mutations by the nucleotide analog ribavirin. Forms an icosahedral capsid of pseudo T=3 symmetry with capsid proteins VP2 and VP3. The capsid is 300 Angstroms in diameter, composed of 60 copies of each capsid protein and enclosing the viral positive strand RNA genome. Capsid protein VP1 mainly forms the vertices of the capsid. Capsid protein VP1 interacts with host cell receptor to provide virion attachment to target host cells. This attachment induces virion internalization. Tyrosine kinases are probably involved in the entry process. After binding to its receptor, the capsid undergoes conformational changes. Capsid protein VP1 N-terminus (that contains an amphipathic alpha-helix) and capsid protein VP4 are externalized. Together, they shape a pore in the host membrane through which viral genome is translocated to host cell cytoplasm. In terms of biological role, forms an icosahedral capsid of pseudo T=3 symmetry with capsid proteins VP2 and VP3. The capsid is 300 Angstroms in diameter, composed of 60 copies of each capsid protein and enclosing the viral positive strand RNA genome. Its function is as follows. Lies on the inner surface of the capsid shell. After binding to the host receptor, the capsid undergoes conformational changes. Capsid protein VP4 is released, Capsid protein VP1 N-terminus is externalized, and together, they shape a pore in the host membrane through which the viral genome is translocated into the host cell cytoplasm. Functionally, component of immature procapsids, which is cleaved into capsid proteins VP4 and VP2 after maturation. Allows the capsid to remain inactive before the maturation step. Cysteine protease that cleaves viral polyprotein and specific host proteins. It is responsible for the autocatalytic cleavage between the P1 and P2 regions, which is the first cleavage occurring in the polyprotein. Also cleaves the host translation initiation factor EIF4G1, in order to shut down the capped cellular mRNA translation. Inhibits the host nucleus-cytoplasm protein and RNA trafficking by cleaving host members of the nuclear pores. Counteracts stress granule formation probably by antagonizing its assembly or promoting its dissassembly. Cleaves and inhibits host IFIH1/MDA5, thereby inhibiting the type-I IFN production and the establishment of the antiviral state. Cleaves and inhibits host MAVS, thereby inhibiting the type-I IFN production and the establishment of the antiviral state. In terms of biological role, plays an essential role in the virus replication cycle by acting as a viroporin. Creates a pore in the host endoplasmic reticulum and as a consequence releases Ca2+ in the cytoplasm of infected cell. In turn, high levels of cytoplasmic calcium may trigger membrane trafficking and transport of viral ER-associated proteins to viroplasms, sites of viral genome replication. Its function is as follows. Induces and associates with structural rearrangements of intracellular membranes. Displays RNA-binding, nucleotide binding and NTPase activities. May play a role in virion morphogenesis and viral RNA encapsidation by interacting with the capsid protein VP3. Functionally, localizes the viral replication complex to the surface of membranous vesicles. Together with protein 3CD binds the Cis-Active RNA Element (CRE) which is involved in RNA synthesis initiation. Acts as a cofactor to stimulate the activity of 3D polymerase, maybe through a nucleid acid chaperone activity. Localizes the viral replication complex to the surface of membranous vesicles. It inhibits host cell endoplasmic reticulum-to-Golgi apparatus transport and causes the disassembly of the Golgi complex, possibly through GBF1 interaction. This would result in depletion of MHC, trail receptors and IFN receptors at the host cell surface. Plays an essential role in viral RNA replication by recruiting ACBD3 and PI4KB at the viral replication sites, thereby allowing the formation of the rearranged membranous structures where viral replication takes place. In terms of biological role, acts as a primer for viral RNA replication and remains covalently bound to viral genomic RNA. VPg is uridylylated prior to priming replication into VPg-pUpU. The oriI viral genomic sequence may act as a template for this. The VPg-pUpU is then used as primer on the genomic RNA poly(A) by the RNA-dependent RNA polymerase to replicate the viral genome. During genome replication, the VPg-RNA linkage is removed by the host TDP2, thereby accelerating replication. During the late stage of the replication cycle, host TDP2 is excluded from sites of viral RNA synthesis and encapsidation, allowing for the generation of progeny virions. Its function is as follows. Involved in the viral replication complex and viral polypeptide maturation. It exhibits protease activity with a specificity and catalytic efficiency that is different from protease 3C. Protein 3CD lacks polymerase activity. Protein 3CD binds to the 5'UTR of the viral genome. Functionally, replicates the viral genomic RNA on the surface of intracellular membranes. May form linear arrays of subunits that propagate along a strong head-to-tail interaction called interface-I. Covalently attaches UMP to a tyrosine of VPg, which is used to prime RNA synthesis. The positive stranded RNA genome is first replicated at virus induced membranous vesicles, creating a dsRNA genomic replication form. This dsRNA is then used as template to synthesize positive stranded RNA genomes. ss(+)RNA genomes are either translated, replicated or encapsidated. Major viral protease that mediates proteolytic processing of the polyprotein. Cleaves host EIF5B, contributing to host translation shutoff. Also cleaves host PABPC1, contributing to host translation shutoff. Cleaves host NLRP1, triggers host N-glycine-mediated degradation of the autoinhibitory NLRP1 N-terminal fragment. In Coxsackievirus A24 (strain EH24/70), this protein is Genome polyprotein.